A 597-amino-acid polypeptide reads, in one-letter code: Gamma-terpinene synthase, chloroplastic (597 aa).

The transit peptide at 1–47 directs the protein to the chloroplast; the sequence is MATLSMQVSILSKQVKNLNSFGMRASKLPMVARRVDVSTTRLRPICS. Residues Asp350 and Asp354 each contribute to the Mn(2+) site. The DDXXD motif motif lies at 350 to 354; the sequence is DDVYD. 2 homodimerization regions span residues 356–362 and 428–464; these read YGTLDEL and EAKW…YFTL. Mn(2+) contacts are provided by Asp494 and Glu502.

The protein belongs to the terpene synthase family. Homodimer. The cofactor is Mn(2+). Mg(2+) serves as cofactor.

The protein resides in the plastid. It localises to the chloroplast. The enzyme catalyses (2E)-geranyl diphosphate = gamma-terpinene + diphosphate. It participates in secondary metabolite biosynthesis; terpenoid biosynthesis. Its function is as follows. Involved in the biosynthesis of phenolic monoterpenes natural products thymol and carvacrol which have a broad range of biological activities acting as antimicrobial compounds, insecticides, antioxidants and pharmaceutical agents. Monoterpene synthase which catalyzes the conversion of geranyl diphosphate (GPP) to gamma-terpinene. This Thymus caespititius (Cretan thyme) protein is Gamma-terpinene synthase, chloroplastic.